The chain runs to 952 residues: 2-oxoglutarate dehydrogenase E1 component (952 aa).

It belongs to the alpha-ketoglutarate dehydrogenase family. In terms of assembly, homodimer. Part of the 2-oxoglutarate dehydrogenase (OGDH) complex composed of E1 (2-oxoglutarate dehydrogenase), E2 (dihydrolipoamide succinyltransferase) and E3 (dihydrolipoamide dehydrogenase); the complex contains multiple copies of the three enzymatic components (E1, E2 and E3). It depends on thiamine diphosphate as a cofactor.

It carries out the reaction N(6)-[(R)-lipoyl]-L-lysyl-[protein] + 2-oxoglutarate + H(+) = N(6)-[(R)-S(8)-succinyldihydrolipoyl]-L-lysyl-[protein] + CO2. Its function is as follows. E1 component of the 2-oxoglutarate dehydrogenase (OGDH) complex which catalyzes the decarboxylation of 2-oxoglutarate, the first step in the conversion of 2-oxoglutarate to succinyl-CoA and CO(2). This is 2-oxoglutarate dehydrogenase E1 component from Geobacillus sp. (strain WCH70).